The chain runs to 294 residues: Ribosomal RNA small subunit methyltransferase A (294 aa).

Residues Asn-31, Leu-33, Gly-58, Glu-79, Asp-111, and Asn-136 each contribute to the S-adenosyl-L-methionine site.

It belongs to the class I-like SAM-binding methyltransferase superfamily. rRNA adenine N(6)-methyltransferase family. RsmA subfamily.

It localises to the cytoplasm. It carries out the reaction adenosine(1518)/adenosine(1519) in 16S rRNA + 4 S-adenosyl-L-methionine = N(6)-dimethyladenosine(1518)/N(6)-dimethyladenosine(1519) in 16S rRNA + 4 S-adenosyl-L-homocysteine + 4 H(+). In terms of biological role, specifically dimethylates two adjacent adenosines (A1518 and A1519) in the loop of a conserved hairpin near the 3'-end of 16S rRNA in the 30S particle. May play a critical role in biogenesis of 30S subunits. The sequence is that of Ribosomal RNA small subunit methyltransferase A from Lactobacillus helveticus (strain DPC 4571).